A 165-amino-acid chain; its full sequence is Nucleotide-binding protein MXAN_1478 (165 aa).

This sequence belongs to the YajQ family.

In terms of biological role, nucleotide-binding protein. This is Nucleotide-binding protein MXAN_1478 from Myxococcus xanthus (strain DK1622).